The sequence spans 338 residues: Solute carrier family 35 member G3 (338 aa).

Positions 1-24 (MAGSHPYFNQPDSTHPSPPSAPPS) are disordered. A run of 9 helical transmembrane segments spans residues 37–57 (TSGL…VGPL), 67–87 (LPSL…ALLL), 105–125 (FFCA…VQVV), 160–180 (CGLL…LWTL), 185–205 (TGVY…ALSL), 221–241 (TVAF…LFVL), 250–270 (LLSW…FTCV), 281–301 (LVCA…YYML), and 305–325 (VAPS…IITA). An EamA 1 domain is found at 49–174 (LPAGFVGPLS…CILGLIIIVG (126 aa)). The EamA 2 domain maps to 272–325 (YAVTKAHPALVCAVLHSEVVVALILQYYMLHETVAPSDIVAAGVVLGSIAIITA).

This sequence belongs to the SLC35G solute transporter family. Expressed in testis.

It is found in the membrane. In Homo sapiens (Human), this protein is Solute carrier family 35 member G3 (SLC35G3).